The sequence spans 624 residues: Leucine-rich repeat, immunoglobulin-like domain and transmembrane domain-containing protein 1 (624 aa).

A signal peptide spans 1-21 (MWVALGMLWLLALGGPHQAWG). An LRRNT domain is found at 22 to 59 (FCPSECSCSLRILSDGSKARTVVCSDPDLTLPPASIPP). Topologically, residues 22 to 527 (FCPSECSCSL…EVVDAEGTQR (506 aa)) are lumenal. LRR repeat units lie at residues 60–81 (DTCKLRLERTAIRRVPGETFRP), 84–105 (RLEQLWLPYNALSELSALMLRG), 108–129 (RLRELRLPGNRLVTFPWAALRD), 132–153 (QLQLLDLQANRLSTLPPEAAHF), and 156–177 (NLTFLDLSNNQLMRLPEELLDV). Asn156 carries N-linked (GlcNAc...) asparagine glycosylation. The region spanning 201-254 (NPWVCDCRLYDLVHLLDGWVSSNLIFIEARLRCASPRSLAGVAFSQLELRKCQS) is the LRRCT domain. Residues 267-336 (PLGSTVLLRC…YICQAKNFLG (70 aa)) enclose the Ig-like C2-type domain. Cys276 and Cys329 are disulfide-bonded. Residues Asn297 and Asn456 are each glycosylated (N-linked (GlcNAc...) asparagine). In terms of domain architecture, Fibronectin type-III spans 431–519 (MVRSLKVVGD…QCVIFSTDEV (89 aa)). Residues 526-549 (QRLINMVVISVAAIIALPPTLLVC) form an LRR 6 repeat. Residues 528 to 548 (LINMVVISVAAIIALPPTLLV) form a helical membrane-spanning segment. The Cytoplasmic segment spans residues 549–624 (CCGALRRRCH…GGRRINEYFC (76 aa)).

As to quaternary structure, may form a homodimer. Interacts with LRIT2; may form a heterodimer with LRIT2. Interacts (via its N-terminal extracellular domain) with metabotropic glutamate receptor GRM6. Interacts (via its extreme C-terminus) with the scaffold protein FRMPD2 (via the third PDZ domain); the interaction leads to their colocalization in photoreceptor synapses. Expressed predominantly in developing photoreceptor and bipolar cells.

It localises to the endoplasmic reticulum membrane. The protein resides in the cell projection. The protein localises to the dendrite. Its function is as follows. Photoreceptor synaptic protein essential for normal vision. Involved in synapse formation in cone photoreceptor cells. The chain is Leucine-rich repeat, immunoglobulin-like domain and transmembrane domain-containing protein 1 (Lrit1) from Mus musculus (Mouse).